A 1401-amino-acid polypeptide reads, in one-letter code: Lysine-specific demethylase 6A (1401 aa).

Residues 1 to 1095 form an interaction with SUPT6H region; that stretch reads MKSCGVSLAT…TNIDLSDDKK (1095 aa). 8 TPR repeats span residues 93–126, 130–163, 170–199, 205–238, 250–283, 284–317, 318–351, and 352–385; these read SDFFCQLGHFNLLLEDYPKALSAYQRYYSLQSDY, AAFLYGLGLVYFHYNAFQWAIKAFQEVLYVDPSF, HLRLGLMFKVNTDYESSLKHFQLALVDCNP, AEIQFHIAHLYETQRKYHSAKEAYEQLLQTENLS, GWMHHTVDLLGDKATKESYAIQYLQKSLEADPNS, GQSWYFLGRCYSSIGKVQDAFISYRQSIDKSEAS, ADTWCSIGVLYQQQNQPMDALQAYICAVQLDHGH, and AAAWMDLGTLYESCNQPQDAIKCYLNATRSKSCS. A compositionally biased stretch (polar residues) spans 437 to 449; it reads AMNTAQQNTSDNW. Residues 437–457 form a disordered region; sequence AMNTAQQNTSDNWSGGHAVSH. Arg519 carries the post-translational modification Omega-N-methylarginine. The tract at residues 521-541 is disordered; sequence TGIPNGPTADSSLPTNSVSGQ. Arg549 is modified (omega-N-methylarginine). Composition is skewed to polar residues over residues 624–652 and 660–724; these read LTSSAEEPWKNQLSNSTQGLHKGQSSHSA and LSST…SGNI. 5 disordered regions span residues 624 to 746, 758 to 778, 810 to 864, 914 to 940, and 1043 to 1079; these read LTSS…SVEG, AVCSPSHGDSKSPGLLSSDNP, KTDN…ESQS, LLDKCPPPRPPSSPYPPLPKDKLNPPT, and FQESLREENEKRSHHKDHSDSESTSSDNSGRRRKGPF. Ser769 is subject to Phosphoserine. Residues 814-833 are compositionally biased toward low complexity; it reads SVASSPSSAISTATPSPKST. Position 827 is a phosphothreonine (Thr827). Position 829 is a phosphoserine (Ser829). The span at 834-848 shows a compositional bias: polar residues; it reads EQTTTNSVTSLNSPH. Over residues 918-931 the composition is skewed to pro residues; the sequence is CPPPRPPSSPYPPL. Positions 1046 to 1063 are enriched in basic and acidic residues; that stretch reads SLREENEKRSHHKDHSDS. Residues 1095-1258 form the JmjC domain; it reads KWKLQLHELT…YKLAVERYEW (164 aa). Positions 1146, 1148, and 1226 each coordinate Fe cation. Zn(2+)-binding residues include Cys1331, Cys1334, Cys1358, and Cys1361.

Belongs to the UTX family. Interacts with TLE1. Component of the MLL2/3 complex (also named ASCOM complex), at least composed of KMT2D/MLL2 or KMT2C/MLL3, ASH2L, RBBP5, WDR5, NCOA6, DPY30, KDM6A (or KDM6B), PAXIP1/PTIP, PAGR1 and alpha- and beta-tubulin. Interacts with SUPT6H. Interacts with SMARCA4. Interacts with PROSER1. Requires L-ascorbate as cofactor. It depends on Fe(2+) as a cofactor.

It is found in the nucleus. The catalysed reaction is N(6),N(6),N(6)-trimethyl-L-lysyl(27)-[histone H3] + 2 2-oxoglutarate + 2 O2 = N(6)-methyl-L-lysyl(27)-[histone H3] + 2 formaldehyde + 2 succinate + 2 CO2. In terms of biological role, histone demethylase that specifically demethylates 'Lys-27' of histone H3, thereby playing a central role in histone code. Demethylates trimethylated and dimethylated but not monomethylated H3 'Lys-27'. Plays a central role in regulation of posterior development, by regulating HOX gene expression. Demethylation of 'Lys-27' of histone H3 is concomitant with methylation of 'Lys-4' of histone H3, and regulates the recruitment of the PRC1 complex and monoubiquitination of histone H2A. Plays a demethylase-independent role in chromatin remodeling to regulate T-box family member-dependent gene expression. The sequence is that of Lysine-specific demethylase 6A (KDM6A) from Homo sapiens (Human).